A 179-amino-acid chain; its full sequence is uncharacterized protein (179 aa).

Residues 1-27 form the signal peptide; the sequence is MNKSMIQSGGYVLLAGLILAMSSTLFA. A disulfide bridge links Cys-43 with Cys-83.

It belongs to the fimbrial protein family.

Its subcellular location is the fimbrium. Its function is as follows. Part of the yfcOPQRSUV fimbrial operon. Could contribute to adhesion to various surfaces in specific environmental niches. Increases adhesion to eukaryotic T24 bladder epithelial cells in the absence of fim genes. This is an uncharacterized protein from Escherichia coli (strain K12).